We begin with the raw amino-acid sequence, 234 residues long: Leucyl/phenylalanyl-tRNA--protein transferase (234 aa).

Belongs to the L/F-transferase family.

It localises to the cytoplasm. It carries out the reaction N-terminal L-lysyl-[protein] + L-leucyl-tRNA(Leu) = N-terminal L-leucyl-L-lysyl-[protein] + tRNA(Leu) + H(+). It catalyses the reaction N-terminal L-arginyl-[protein] + L-leucyl-tRNA(Leu) = N-terminal L-leucyl-L-arginyl-[protein] + tRNA(Leu) + H(+). The enzyme catalyses L-phenylalanyl-tRNA(Phe) + an N-terminal L-alpha-aminoacyl-[protein] = an N-terminal L-phenylalanyl-L-alpha-aminoacyl-[protein] + tRNA(Phe). Functionally, functions in the N-end rule pathway of protein degradation where it conjugates Leu, Phe and, less efficiently, Met from aminoacyl-tRNAs to the N-termini of proteins containing an N-terminal arginine or lysine. The chain is Leucyl/phenylalanyl-tRNA--protein transferase from Shigella flexneri serotype 5b (strain 8401).